The primary structure comprises 49 residues: Large ribosomal subunit protein bL33B (49 aa).

Belongs to the bacterial ribosomal protein bL33 family.

The chain is Large ribosomal subunit protein bL33B from Lactobacillus delbrueckii subsp. bulgaricus (strain ATCC BAA-365 / Lb-18).